A 798-amino-acid polypeptide reads, in one-letter code: Phenylalanine--tRNA ligase beta subunit (798 aa).

In terms of domain architecture, tRNA-binding spans 39-148; sequence NPIFDGFLVG…EDIPIGKKIN (110 aa). The region spanning 402-477 is the B5 domain; sequence SCSNKIKLYH…RIYNYNNIPL (76 aa). Residues Asp-455, Asp-461, and Asp-465 each contribute to the Mg(2+) site. One can recognise an FDX-ACB domain in the interval 704–797; sequence SKYPTSRRDI…LKKKFQVVLR (94 aa).

It belongs to the phenylalanyl-tRNA synthetase beta subunit family. Type 1 subfamily. In terms of assembly, tetramer of two alpha and two beta subunits. Mg(2+) is required as a cofactor.

Its subcellular location is the cytoplasm. It catalyses the reaction tRNA(Phe) + L-phenylalanine + ATP = L-phenylalanyl-tRNA(Phe) + AMP + diphosphate + H(+). The protein is Phenylalanine--tRNA ligase beta subunit (pheT) of Buchnera aphidicola subsp. Schizaphis graminum (strain Sg).